The sequence spans 168 residues: S-ribosylhomocysteine lyase (168 aa).

Positions 54, 58, and 128 each coordinate Fe cation.

The protein belongs to the LuxS family. As to quaternary structure, homodimer. Fe cation serves as cofactor.

It carries out the reaction S-(5-deoxy-D-ribos-5-yl)-L-homocysteine = (S)-4,5-dihydroxypentane-2,3-dione + L-homocysteine. In terms of biological role, involved in the synthesis of autoinducer 2 (AI-2) which is secreted by bacteria and is used to communicate both the cell density and the metabolic potential of the environment. The regulation of gene expression in response to changes in cell density is called quorum sensing. Catalyzes the transformation of S-ribosylhomocysteine (RHC) to homocysteine (HC) and 4,5-dihydroxy-2,3-pentadione (DPD). In Actinobacillus succinogenes (strain ATCC 55618 / DSM 22257 / CCUG 43843 / 130Z), this protein is S-ribosylhomocysteine lyase.